The following is a 4730-amino-acid chain: Dynein heavy chain, cytoplasmic (4730 aa).

2 disordered regions span residues 1 to 23 and 91 to 120; these read MEDQ…VVTP and TINS…QQQS. The interval 1-1935 is stem; that stretch reads MEDQQINVDS…VIHMANATFY (1935 aa). Positions 10–23 are enriched in low complexity; the sequence is SPTSGTNTPPVVTP. A coiled-coil region spans residues 867-900; it reads VRKLSTSINNFRDKVDDLIVKYSEIKKQLDGLKS. The interval 964–1016 is disordered; the sequence is EDQKDSQSTSGSSNKGGKLNRMNYSIRNKSDEENSSDLTQPQQSQQQQQTISI. Polar residues predominate over residues 969–978; the sequence is SQSTSGSSNK. Residues 1002–1016 show a composition bias toward low complexity; that stretch reads TQPQQSQQQQQTISI. Coiled-coil stretches lie at residues 1204 to 1224, 1343 to 1372, 1425 to 1441, and 1661 to 1689; these read EKMN…EKLS, ALET…QALD, RKVR…LKNL, and AIER…YLER. AAA regions lie at residues 1936 to 2158, 2238 to 2531, 2635 to 2885, and 2978 to 3252; these read YGFE…VLVS, KKIQ…FTRL, EVET…WDRA, and VFYE…QGRQ. 1974-1981 contributes to the ATP binding site; that stretch reads GPAGTGKT. The stretch at 2231–2253 forms a coiled coil; the sequence is IQMDQLRKKIQEIAKQRHLVTKQ. 2276-2283 is a binding site for ATP; the sequence is GPSGGGKT. Residues 2437-2486 form a disordered region; that stretch reads EPFDPQEKEQQKRNENAQLQQQQQTTITSPILTSPPTTSSSSRSTTSTTS. Residues 2441 to 2451 show a composition bias toward basic and acidic residues; that stretch reads PQEKEQQKRNE. A coiled-coil region spans residues 2442 to 2462; it reads QEKEQQKRNENAQLQQQQQTT. A compositionally biased stretch (low complexity) spans 2454–2486; that stretch reads QLQQQQQTTITSPILTSPPTTSSSSRSTTSTTS. ATP contacts are provided by residues 2674-2681 and 3016-3023; these read GPPGSGKT and GVSGGGKS. Coiled coils occupy residues 3271–3349, 3483–3585, and 3854–3881; these read INEK…VQLD, AQTY…NTQM, and TLET…EISE. The segment at 3271–3585 is stalk; that stretch reads INEKRDQLEE…QQSENFNTQM (315 aa). AAA stretches follow at residues 3638 to 3867 and 4098 to 4312; these read LSKP…EIAL and SHSF…SIDY. The interval 4432–4465 is disordered; the sequence is KMQSSEEDGEDDQVSGSSKKESSSSSSEDKGKAK. The segment covering 4449–4463 has biased composition (basic and acidic residues); it reads SKKESSSSSSEDKGK.

This sequence belongs to the dynein heavy chain family. In terms of assembly, consists of at least two heavy chains and a number of intermediate and light chains.

It is found in the cytoplasm. Its subcellular location is the cytoskeleton. In terms of biological role, cytoplasmic dynein acts as a motor for the intracellular retrograde motility of vesicles and organelles along microtubules. Dynein has ATPase activity; the force-producing power stroke is thought to occur on release of ADP. The polypeptide is Dynein heavy chain, cytoplasmic (dhcA) (Dictyostelium discoideum (Social amoeba)).